The chain runs to 130 residues: uncharacterized protein (130 aa).

One can recognise an HTH cro/C1-type domain in the interval 19–73 (IYSLRLAKGLSRQQLAEVIDVTHQQLQKYEKAINRISVGRLVLIAEALDRNIDYF). Residues 30–49 (RQQLAEVIDVTHQQLQKYEK) constitute a DNA-binding region (H-T-H motif).

This is an uncharacterized protein from Rickettsia prowazekii (strain Madrid E).